Reading from the N-terminus, the 427-residue chain is Ribosome biogenesis protein WDR12 homolog (427 aa).

Positions 13 to 97 (LQLHLYTKQK…EDTVELEYVE (85 aa)) are ubiquitin-like (UBL) domain. WD repeat units follow at residues 109–146 (LHDD…KLTI), 148–190 (GHIA…NSVE), 197–236 (GHER…DGDS), 260–298 (GHRE…IKSE), 301–339 (GHKS…GTIV), 345–385 (GHTQ…APIF), and 389–427 (GHED…GEQK).

It belongs to the WD repeat WDR12/YTM1 family.

The protein localises to the nucleus. The protein resides in the nucleolus. Its subcellular location is the nucleoplasm. Its function is as follows. Required for maturation of ribosomal RNAs and formation of the large ribosomal subunit. This chain is Ribosome biogenesis protein WDR12 homolog, found in Aedes aegypti (Yellowfever mosquito).